Reading from the N-terminus, the 287-residue chain is Putative holocytochrome-c1 synthase (287 aa).

Residues 1–12 (MRGFGSDSSQAS) are compositionally biased toward polar residues. 2 disordered regions span residues 1 to 63 (MRGF…QPSS) and 81 to 100 (QSQS…SAPL). 2 stretches are compositionally biased toward low complexity: residues 31–63 (QARA…QPSS) and 81–92 (QSQSANSTQQAQ).

It belongs to the cytochrome c-type heme lyase family.

It localises to the mitochondrion inner membrane. It catalyses the reaction holo-[cytochrome c] = apo-[cytochrome c] + heme b. Its function is as follows. Probable lyase that catalyzes the covalent linking of the heme group to the cytochrome C apoprotein to produce the mature functional cytochrome. The polypeptide is Putative holocytochrome-c1 synthase (Chaetomium thermophilum (strain DSM 1495 / CBS 144.50 / IMI 039719) (Thermochaetoides thermophila)).